A 561-amino-acid polypeptide reads, in one-letter code: Oxygen-dependent choline dehydrogenase (561 aa).

An FAD-binding site is contributed by 7 to 36 (DYIIVGAGSAGNVLASRLAEDADVTVLLLE). His-474 serves as the catalytic Proton acceptor.

Belongs to the GMC oxidoreductase family. The cofactor is FAD.

The enzyme catalyses choline + A = betaine aldehyde + AH2. It carries out the reaction betaine aldehyde + NAD(+) + H2O = glycine betaine + NADH + 2 H(+). Its pathway is amine and polyamine biosynthesis; betaine biosynthesis via choline pathway; betaine aldehyde from choline (cytochrome c reductase route): step 1/1. In terms of biological role, involved in the biosynthesis of the osmoprotectant glycine betaine. Catalyzes the oxidation of choline to betaine aldehyde and betaine aldehyde to glycine betaine at the same rate. The polypeptide is Oxygen-dependent choline dehydrogenase (Paraburkholderia xenovorans (strain LB400)).